The primary structure comprises 362 residues: 1-aminocyclopropane-1-carboxylate oxidase homolog 10 (362 aa).

Positions 211 to 310 (KGLFMLCHYY…RISVACFFSS (100 aa)) constitute a Fe2OG dioxygenase domain. Fe cation is bound by residues His235, Asp237, and His291. Residue Arg301 coordinates 2-oxoglutarate.

The protein belongs to the iron/ascorbate-dependent oxidoreductase family. The cofactor is Fe(2+).

The sequence is that of 1-aminocyclopropane-1-carboxylate oxidase homolog 10 from Arabidopsis thaliana (Mouse-ear cress).